The following is a 229-amino-acid chain: Ribosomal RNA large subunit methyltransferase E (229 aa).

A disordered region spans residues 1 to 20; the sequence is MSRAGNGGRQRIKTAKGRSA. Gly-75, Trp-77, Asp-94, Asp-110, and Asp-134 together coordinate S-adenosyl-L-methionine. Lys-174 functions as the Proton acceptor in the catalytic mechanism.

It belongs to the class I-like SAM-binding methyltransferase superfamily. RNA methyltransferase RlmE family.

Its subcellular location is the cytoplasm. The catalysed reaction is uridine(2552) in 23S rRNA + S-adenosyl-L-methionine = 2'-O-methyluridine(2552) in 23S rRNA + S-adenosyl-L-homocysteine + H(+). Its function is as follows. Specifically methylates the uridine in position 2552 of 23S rRNA at the 2'-O position of the ribose in the fully assembled 50S ribosomal subunit. The sequence is that of Ribosomal RNA large subunit methyltransferase E from Rhizorhabdus wittichii (strain DSM 6014 / CCUG 31198 / JCM 15750 / NBRC 105917 / EY 4224 / RW1) (Sphingomonas wittichii).